The sequence spans 310 residues: MIIVTGGAGFIGSNIVKALNDKGITDILVVDNLKDGTKFVNLVDLNIADYMDKEDFLIQIMAGEEFGEIEAIFHEGACSSTTEWDGKYMMDNNYQYSKELLHYCLEREIPFLYASSAATYGGRTSDFIESREYEQPLNVYGYSKFLFDEYVRQILPEANSQIVGFRYFNVYGPREGHKGSMASVAFHLNTQLNNGESPKLFEGSDGFKRDFVYVGDVADVNLWFWENGVSGIFNLGTGRAESFQAVADATLAYHKKGSIEYIPFPDKLKGRYQAFTQADLTNLRKAGYDKPFKTVAEGVTEYMAWLNRDA.

NADP(+) contacts are provided by residues 10–11 (FI), 31–32 (DN), Lys-38, Lys-53, 75–79 (EGACS), and Asn-92. Tyr-140 acts as the Proton acceptor in catalysis. NADP(+) is bound at residue Lys-144. Asn-169 is a substrate binding site. NADP(+) contacts are provided by Val-170 and Lys-178. Lys-178 acts as the Proton acceptor in catalysis. Substrate is bound by residues Ser-180, His-187, 201 to 204 (FEGS), Arg-209, and Tyr-272.

This sequence belongs to the NAD(P)-dependent epimerase/dehydratase family. HldD subfamily. In terms of assembly, homopentamer. NADP(+) is required as a cofactor.

The catalysed reaction is ADP-D-glycero-beta-D-manno-heptose = ADP-L-glycero-beta-D-manno-heptose. Its pathway is nucleotide-sugar biosynthesis; ADP-L-glycero-beta-D-manno-heptose biosynthesis; ADP-L-glycero-beta-D-manno-heptose from D-glycero-beta-D-manno-heptose 7-phosphate: step 4/4. Catalyzes the interconversion between ADP-D-glycero-beta-D-manno-heptose and ADP-L-glycero-beta-D-manno-heptose via an epimerization at carbon 6 of the heptose. The sequence is that of ADP-L-glycero-D-manno-heptose-6-epimerase from Klebsiella pneumoniae subsp. pneumoniae (strain ATCC 700721 / MGH 78578).